A 175-amino-acid chain; its full sequence is Mitochondrial inner membrane protease subunit 2 (175 aa).

The helical transmembrane segment at 19–37 threads the bilayer; sequence FFVAVPVAVTFLDRVACVA. Active-site residues include Ser-43 and Lys-91.

It belongs to the peptidase S26 family. IMP2 subfamily. Heterodimer of 2 subunits, IMMPL1 and IMMPL2.

It localises to the mitochondrion inner membrane. Functionally, catalyzes the removal of transit peptides required for the targeting of proteins from the mitochondrial matrix, across the inner membrane, into the inter-membrane space. Known to process the nuclear encoded protein DIABLO. This is Mitochondrial inner membrane protease subunit 2 (Immp2l) from Mus musculus (Mouse).